Here is a 161-residue protein sequence, read N- to C-terminus: Large ribosomal subunit protein uL15 (161 aa).

The span at 1-13 shows a compositional bias: basic and acidic residues; the sequence is MKLNELRDNEGAA. The segment at 1-51 is disordered; sequence MKLNELRDNEGAARKKKRVARGPGSGKGKTAGRGIKGQKSRSGVALNGYEG. Residues 23-35 show a composition bias toward gly residues; it reads PGSGKGKTAGRGI.

Belongs to the universal ribosomal protein uL15 family. In terms of assembly, part of the 50S ribosomal subunit.

Functionally, binds to the 23S rRNA. This Cereibacter sphaeroides (strain ATCC 17023 / DSM 158 / JCM 6121 / CCUG 31486 / LMG 2827 / NBRC 12203 / NCIMB 8253 / ATH 2.4.1.) (Rhodobacter sphaeroides) protein is Large ribosomal subunit protein uL15.